A 259-amino-acid chain; its full sequence is MLAKRIIPCLDVTGGRVVKGVNFLELRDAGDPVEIAARYNAQGADELTFLDITATSDGRDLILPIIEAVASQVFIPLTVGGGVRTVADVRRLLNAGADKTSFNSAAIADPQVINDASQKYGSQCIVVAIDAKRRSPEEAATRGAGWDVYSHGGRKNTGLDAVEWATEMVRRGAGEILLTSMDRDGTKSGFDLALTRAVSDAVNVPVIASGGVGSLDDLADGIQTGGADAVLAASIFHYGEHTVGEAKARMAARGIPVRT.

Residues D11 and D130 contribute to the active site.

Belongs to the HisA/HisF family. As to quaternary structure, heterodimer of HisH and HisF.

It localises to the cytoplasm. It carries out the reaction 5-[(5-phospho-1-deoxy-D-ribulos-1-ylimino)methylamino]-1-(5-phospho-beta-D-ribosyl)imidazole-4-carboxamide + L-glutamine = D-erythro-1-(imidazol-4-yl)glycerol 3-phosphate + 5-amino-1-(5-phospho-beta-D-ribosyl)imidazole-4-carboxamide + L-glutamate + H(+). It functions in the pathway amino-acid biosynthesis; L-histidine biosynthesis; L-histidine from 5-phospho-alpha-D-ribose 1-diphosphate: step 5/9. IGPS catalyzes the conversion of PRFAR and glutamine to IGP, AICAR and glutamate. The HisF subunit catalyzes the cyclization activity that produces IGP and AICAR from PRFAR using the ammonia provided by the HisH subunit. In Variovorax paradoxus (strain S110), this protein is Imidazole glycerol phosphate synthase subunit HisF.